Reading from the N-terminus, the 332-residue chain is MSDFAFFALEALIKCIIIIAIFASLAGLATYAERKVLAYFQRRIGPDMVGPFGLIQLVADMIKLFTKEDIIPSNSQKFIFAIAPLISAICAFVSLAAIPMLPEFTLFGRVIQPIVADINVALLFVIGTSGLCFYAVFLGGLASNNKWSILGAARGLVAIISYESVGALALIAIVMLVGSFSLVDINNYQSDGFFSWLIFKQPLAFVLFIIALFIETNRTPLCLTENDAEIVAGYGTEYSGLRWGMFFIGEYASMIAGAILVTLLFLGGFNGFWIIPGWIMMIVKSSFIFFWYFWARAAFPQLRPDQVMKMCYLILIPLAVVNLLITALAVLL.

9 helical membrane passes run 4–24 (FAFFALEALIKCIIIIAIFAS), 44–64 (IGPDMVGPFGLIQLVADMIKL), 78–98 (FIFAIAPLISAICAFVSLAAI), 120–140 (VALLFVIGTSGLCFYAVFLGG), 165–185 (VGALALIAIVMLVGSFSLVDI), 194–214 (FSWLIFKQPLAFVLFIIALFI), 255–275 (IAGAILVTLLFLGGFNGFWII), 279–299 (IMMIVKSSFIFFWYFWARAAF), and 312–332 (YLILIPLAVVNLLITALAVLL).

The protein belongs to the complex I subunit 1 family. NDH-1 is composed of 14 different subunits. Subunits NuoA, H, J, K, L, M, N constitute the membrane sector of the complex.

It is found in the cell inner membrane. The catalysed reaction is a quinone + NADH + 5 H(+)(in) = a quinol + NAD(+) + 4 H(+)(out). NDH-1 shuttles electrons from NADH, via FMN and iron-sulfur (Fe-S) centers, to quinones in the respiratory chain. The immediate electron acceptor for the enzyme in this species is believed to be ubiquinone. Couples the redox reaction to proton translocation (for every two electrons transferred, four hydrogen ions are translocated across the cytoplasmic membrane), and thus conserves the redox energy in a proton gradient. This subunit may bind ubiquinone. The sequence is that of NADH-quinone oxidoreductase subunit H from Campylobacter jejuni subsp. doylei (strain ATCC BAA-1458 / RM4099 / 269.97).